A 427-amino-acid chain; its full sequence is 3-phosphoshikimate 1-carboxyvinyltransferase (427 aa).

3-phosphoshikimate contacts are provided by lysine 20, serine 21, and arginine 25. Lysine 20 provides a ligand contact to phosphoenolpyruvate. Phosphoenolpyruvate contacts are provided by glycine 92 and arginine 120. The 3-phosphoshikimate site is built by serine 166, glutamine 168, aspartate 312, and lysine 339. Glutamine 168 contributes to the phosphoenolpyruvate binding site. The active-site Proton acceptor is the aspartate 312. Phosphoenolpyruvate-binding residues include arginine 343 and arginine 385.

This sequence belongs to the EPSP synthase family. As to quaternary structure, monomer.

It localises to the cytoplasm. It catalyses the reaction 3-phosphoshikimate + phosphoenolpyruvate = 5-O-(1-carboxyvinyl)-3-phosphoshikimate + phosphate. Its pathway is metabolic intermediate biosynthesis; chorismate biosynthesis; chorismate from D-erythrose 4-phosphate and phosphoenolpyruvate: step 6/7. In terms of biological role, catalyzes the transfer of the enolpyruvyl moiety of phosphoenolpyruvate (PEP) to the 5-hydroxyl of shikimate-3-phosphate (S3P) to produce enolpyruvyl shikimate-3-phosphate and inorganic phosphate. This Streptococcus sanguinis (strain SK36) protein is 3-phosphoshikimate 1-carboxyvinyltransferase.